The chain runs to 61 residues: Large ribosomal subunit protein bL32 (61 aa).

The protein belongs to the bacterial ribosomal protein bL32 family.

This is Large ribosomal subunit protein bL32 from Ehrlichia chaffeensis (strain ATCC CRL-10679 / Arkansas).